The primary structure comprises 326 residues: ATP synthase subunit gamma, mitochondrial (326 aa).

The transit peptide at 1-45 (MAMAALRREGRRLAAAPFTSPTPLNALRSSLVSPSEEIGLSGVRS) directs the protein to the mitochondrion.

It belongs to the ATPase gamma chain family. In terms of assembly, F-type ATPases have 2 components, CF(1) - the catalytic core - and CF(0) - the membrane proton channel. CF(1) has five subunits: alpha(3), beta(3), gamma(1), delta(1), epsilon(1). CF(0) has three main subunits: a, b and c.

Its subcellular location is the mitochondrion. It is found in the mitochondrion inner membrane. Mitochondrial membrane ATP synthase (F(1)F(0) ATP synthase or Complex V) produces ATP from ADP in the presence of a proton gradient across the membrane which is generated by electron transport complexes of the respiratory chain. F-type ATPases consist of two structural domains, F(1) - containing the extramembraneous catalytic core, and F(0) - containing the membrane proton channel, linked together by a central stalk and a peripheral stalk. During catalysis, ATP synthesis in the catalytic domain of F(1) is coupled via a rotary mechanism of the central stalk subunits to proton translocation. Part of the complex F(1) domain and the central stalk which is part of the complex rotary element. The gamma subunit protrudes into the catalytic domain formed of alpha(3)beta(3). Rotation of the central stalk against the surrounding alpha(3)beta(3) subunits leads to hydrolysis of ATP in three separate catalytic sites on the beta subunits. This is ATP synthase subunit gamma, mitochondrial (ATPC) from Ipomoea batatas (Sweet potato).